Reading from the N-terminus, the 37-residue chain is uncharacterized protein (37 aa).

This is an uncharacterized protein from Bacillus caldotenax.